A 197-amino-acid polypeptide reads, in one-letter code: ATP-dependent Clp protease proteolytic subunit (197 aa).

Serine 102 acts as the Nucleophile in catalysis. Histidine 127 is an active-site residue.

This sequence belongs to the peptidase S14 family. In terms of assembly, fourteen ClpP subunits assemble into 2 heptameric rings which stack back to back to give a disk-like structure with a central cavity, resembling the structure of eukaryotic proteasomes.

Its subcellular location is the cytoplasm. The catalysed reaction is Hydrolysis of proteins to small peptides in the presence of ATP and magnesium. alpha-casein is the usual test substrate. In the absence of ATP, only oligopeptides shorter than five residues are hydrolyzed (such as succinyl-Leu-Tyr-|-NHMec, and Leu-Tyr-Leu-|-Tyr-Trp, in which cleavage of the -Tyr-|-Leu- and -Tyr-|-Trp bonds also occurs).. Cleaves peptides in various proteins in a process that requires ATP hydrolysis. Has a chymotrypsin-like activity. Plays a major role in the degradation of misfolded proteins. In Borreliella afzelii (strain PKo) (Borrelia afzelii), this protein is ATP-dependent Clp protease proteolytic subunit.